We begin with the raw amino-acid sequence, 232 residues long: 7-cyano-7-deazaguanine synthase (232 aa).

Position 8 to 18 (8 to 18 (FSGGQDSTTCL)) interacts with ATP. Residues Cys187, Cys196, Cys199, and Cys202 each coordinate Zn(2+).

It belongs to the QueC family. Requires Zn(2+) as cofactor.

The enzyme catalyses 7-carboxy-7-deazaguanine + NH4(+) + ATP = 7-cyano-7-deazaguanine + ADP + phosphate + H2O + H(+). Its pathway is purine metabolism; 7-cyano-7-deazaguanine biosynthesis. Catalyzes the ATP-dependent conversion of 7-carboxy-7-deazaguanine (CDG) to 7-cyano-7-deazaguanine (preQ(0)). In Vibrio parahaemolyticus serotype O3:K6 (strain RIMD 2210633), this protein is 7-cyano-7-deazaguanine synthase.